A 396-amino-acid chain; its full sequence is Elongation factor Tu 1 (396 aa).

One can recognise a tr-type G domain in the interval 10 to 206 (KPHVNVGTIG…ALDTYIPTPE (197 aa)). Residues 19-26 (GHVDHGKT) form a G1 region. 19 to 26 (GHVDHGKT) provides a ligand contact to GTP. Thr-26 lines the Mg(2+) pocket. Residues 60–64 (GITIN) are G2. Residues 81–84 (DCPG) form a G3 region. Residues 81–85 (DCPGH) and 136–139 (NKAD) contribute to the GTP site. A G4 region spans residues 136-139 (NKAD). Residues 174–176 (SAK) form a G5 region.

Belongs to the TRAFAC class translation factor GTPase superfamily. Classic translation factor GTPase family. EF-Tu/EF-1A subfamily. Monomer.

Its subcellular location is the cytoplasm. It carries out the reaction GTP + H2O = GDP + phosphate + H(+). Its function is as follows. GTP hydrolase that promotes the GTP-dependent binding of aminoacyl-tRNA to the A-site of ribosomes during protein biosynthesis. This Methylobacillus flagellatus (strain ATCC 51484 / DSM 6875 / VKM B-1610 / KT) protein is Elongation factor Tu 1.